The sequence spans 182 residues: Probable RNA 2'-phosphotransferase (182 aa).

This sequence belongs to the KptA/TPT1 family.

Functionally, removes the 2'-phosphate from RNA via an intermediate in which the phosphate is ADP-ribosylated by NAD followed by a presumed transesterification to release the RNA and generate ADP-ribose 1''-2''-cyclic phosphate (APPR&gt;P). May function as an ADP-ribosylase. The chain is Probable RNA 2'-phosphotransferase from Pseudomonas aeruginosa (strain UCBPP-PA14).